The primary structure comprises 307 residues: MYSMLDTDLKSPVQQSNAPNGGPGTPGGKGNASIPDQERVKRPMNAFMVWSRGQRRKMAQENPKMHNSEISKRLGADWKLLSDSEKRPFIDEAKRLRAVHMKEYPDYKYRPRRKTKTLLKKDKYSLPGNLLAPGVSPVASSVGVGQRIDTYAHMNGWTNGAYSLMQDQLGYSQHPGMNSPQMQQIQHRYDMGGLQYSPMMSSAQTYMNAAASTYSMSPAYNQQSSTVMSLGSMGSVVKSEPSSPPPAITSHTQRACLGDLRDMISMYLPPGGDASDPSSLQSSRLHSVHQHYQSAAGPNGTVPLTHI.

The tract at residues 1 to 41 is disordered; that stretch reads MYSMLDTDLKSPVQQSNAPNGGPGTPGGKGNASIPDQERVK. Positions 21–30 are enriched in gly residues; sequence GGPGTPGGKG. The segment at residues 40 to 108 is a DNA-binding region (HMG box); that stretch reads VKRPMNAFMV…VHMKEYPDYK (69 aa). A 9aaTAD motif is present at residues 259–270; it reads DLRDMISMYLPP.

Interacts with ctnnb1.

Its subcellular location is the nucleus. It is found in the cytoplasm. Transcription factor with sequence-specific DNA binding activity. Binds to the consensus sequence 5'-[AT][AT]CAA[AT]G-3', showing a preference for 5'-AACAAT-3' and 5'-AACAAAG-3'. Inhibits beta-catenin-mediated dorsal axis specification by binding to sites within the promoter of the beta-catenin-regulated gene nodal5. Maternally derived sox3 acts as a transcriptional repressor of nodal5 and nodal6 to restrict their expression to the vegetal hemisphere of early embryos and thus establish germ layer formation. Acts at multiple points to inhibit nodal signaling, repressing the expression of the other mesoderm-inducing nodal genes nodal, nodal2 and nodal4, and also acting downstream to induce expression of genes including trim33/ectodermin, ema and coco, whose products repress nodal signaling. The polypeptide is Transcription factor Sox-3 (Xenopus tropicalis (Western clawed frog)).